An 88-amino-acid polypeptide reads, in one-letter code: Alpha-latrotoxin-associated low molecular weight protein-2 (88 aa).

The first 19 residues, 1–19 (MLKLICIAFLVTVLTLVAG), serve as a signal peptide directing secretion. Q20 carries the pyrrolidone carboxylic acid modification. Cystine bridges form between C30-C66, C46-C62, and C49-C75.

Belongs to the arthropod CHH/MIH/GIH/VIH hormone family. The N-terminus is blocked. As to expression, expressed by the venom gland.

It is found in the secreted. In terms of biological role, may increase the toxicity of alpha-latrotoxin and/or other venom components. Is non-toxic to mice and to the cockroach Periplaneta americana. The sequence is that of Alpha-latrotoxin-associated low molecular weight protein-2 from Latrodectus tredecimguttatus (Mediterranean black widow spider).